Consider the following 323-residue polypeptide: MKRAPVIPKHTLNTQPVEDTSLSTPAAPMVDSLIARVGVMARGNAITLPVCGRDVKFTLEVLRGDSVEKTSRVWSGNERDQELLTEDALDDLIPSFLLTGQQTPAFGRRVSGVIEIADGSRRRKAAALTESDYRVLVGELDDEQMAALSRLGNDYRPTSAYERGQRYASRLQNEFAGNISALADAENISRKIITRCINTAKLPKSVVALFSHPGELSARSGDALQKAFTDKEELLKQQASNLHEQKKAGVIFEAEEVITLLTSVLKTSSASRTSLSSRHQFAPGATVLYKGDKMVLNLDRSRVPTECIEKIEAILKELEKPAP.

Residues 1–20 (MKRAPVIPKHTLNTQPVEDT) are disordered. The segment covering 11–20 (TLNTQPVEDT) has biased composition (polar residues). The segment at residues 180 to 199 (SALADAENISRKIITRCINT) is a DNA-binding region (H-T-H motif).

The protein belongs to the ParB family.

Control of plasmid partitioning; required to recognize the cis-acting. Binds specifically with the DNA segment containing the sopC region. SopB is trans-acting. The sequence is that of Protein SopB (sopB) from Escherichia coli O157:H7.